We begin with the raw amino-acid sequence, 485 residues long: Glutamyl-tRNA(Gln) amidotransferase subunit A (485 aa).

Active-site charge relay system residues include Lys79 and Ser154. Catalysis depends on Ser178, which acts as the Acyl-ester intermediate.

It belongs to the amidase family. GatA subfamily. In terms of assembly, heterotrimer of A, B and C subunits.

The enzyme catalyses L-glutamyl-tRNA(Gln) + L-glutamine + ATP + H2O = L-glutaminyl-tRNA(Gln) + L-glutamate + ADP + phosphate + H(+). Its function is as follows. Allows the formation of correctly charged Gln-tRNA(Gln) through the transamidation of misacylated Glu-tRNA(Gln) in organisms which lack glutaminyl-tRNA synthetase. The reaction takes place in the presence of glutamine and ATP through an activated gamma-phospho-Glu-tRNA(Gln). The polypeptide is Glutamyl-tRNA(Gln) amidotransferase subunit A (Bacillus pumilus (strain SAFR-032)).